A 608-amino-acid chain; its full sequence is N(6)-adenosine-methyltransferase MT-A70-like protein (608 aa).

A compositionally biased stretch (basic and acidic residues) spans 250–265 (KKKQERRDEKELRPDV). Residues 250-272 (KKKQERRDEKELRPDVDAGENVT) form a disordered region. Residues 395–396 (DL) and Asp-413 contribute to the S-adenosyl-L-methionine site. Positions 414–428 (PPWDIHMELPYGTMS) are gate loop 1. The interval 480–497 (QLQRIIRTGRTGHWLNHG) is interphase loop. Positions 483 to 496 (RIIRTGRTGHWLNH) are positively charged region required for RNA-binding. The tract at residues 525-533 (VRATSHKPD) is gate loop 2. Residues Lys-531, 554 to 557 (RPHN), and 567 to 568 (NQ) contribute to the S-adenosyl-L-methionine site.

Belongs to the MT-A70-like family. Component of the WMM complex, a N6-methyltransferase complex composed of a catalytic subcomplex, named MAC, and of an associated subcomplex, named MACOM. The MAC subcomplex is composed of Ime4/Mettl3 and Mettl14. The MACOM subcomplex is composed of fl(2)d, Flacc/Xio, Hakai, vir, and, in some cases of nito. In terms of tissue distribution, expressed in testes. In the ovaries, detected in germaria, prefollicle, follicle and polar cells (at protein levels). Detected in the ooplasm and in the cells of the 16-cell cyst of early stages (at protein levels).

It is found in the nucleus. The catalysed reaction is an adenosine in mRNA + S-adenosyl-L-methionine = an N(6)-methyladenosine in mRNA + S-adenosyl-L-homocysteine + H(+). In terms of biological role, catalytic component of the WMM complex, a complex that mediates N6-methyladenosine (m6A) methylation of mRNAs, a modification that plays a role in the efficiency of mRNA splicing and is required for sex determination. In the heterodimer formed with Mettl14, constitutes the catalytic core. Required for sex determination and dosage compensation via Sxl alternative splicing: m6A methylation acts as a key regulator of Sxl pre-mRNA and promotes female-specific alternative splicing of Sxl, which determines female physiognomy. M6A methylation is also required for neuronal functions. During oogenesis, required for egg chamber development probably as part of the N/Notch signaling. This chain is N(6)-adenosine-methyltransferase MT-A70-like protein, found in Drosophila melanogaster (Fruit fly).